Here is a 661-residue protein sequence, read N- to C-terminus: Heme transporter BhuA (661 aa).

A signal peptide spans 1–23 (MKFTRTLVLASTSLLATVATSQA). The 112-residue stretch at 48 to 159 (KDNIEATGGT…AAGAIRYETV (112 aa)) folds into the TBDR plug domain. The 492-residue stretch at 170–661 (TFGARIIGSY…TFTFQTAFKF (492 aa)) folds into the TBDR beta-barrel domain.

Belongs to the TonB-dependent receptor family.

The protein localises to the cell outer membrane. In terms of biological role, heme transporter. In Brucella abortus biovar 1 (strain 9-941), this protein is Heme transporter BhuA (bhuA).